Here is an 815-residue protein sequence, read N- to C-terminus: Tubulin polyglutamylase TTLL13 (815 aa).

The TTL domain maps to 85 to 430 (RRSLAINLTN…RGCDKRKVME (346 aa)). Residues K202, 208–209 (QG), 230–233 (QQYI), and 243–245 (KFD) each bind ATP. Q208 lines the a protein pocket. R269 is a binding site for L-glutamate. 291 to 292 (TN) lines the ATP pocket. Residues Y293 and K311 each coordinate L-glutamate. Mg(2+) is bound by residues D376, E389, and N391. The interval 401 to 482 (CLDQEVKDAL…LGKYRRIYPG (82 aa)) is c-MTBD region. K407 provides a ligand contact to L-glutamate. Residues 504–528 (ASKAREECARQQLEEIRLKQEQQET) are a coiled coil. A disordered region spans residues 520-556 (RLKQEQQETSGTKRQKARDQNQGESAGEKSRPRAGLQ). Over residues 536-550 (ARDQNQGESAGEKSR) the composition is skewed to basic and acidic residues.

The protein belongs to the tubulin--tyrosine ligase family. Requires Mg(2+) as cofactor.

It catalyses the reaction (L-glutamyl)(n)-gamma-L-glutamyl-L-glutamyl-[protein] + L-glutamate + ATP = (L-glutamyl)(n+1)-gamma-L-glutamyl-L-glutamyl-[protein] + ADP + phosphate + H(+). Polyglutamylase which modifies tubulin, generating polyglutamate side chains of variable lengths on the gamma-carboxyl group of specific glutamate residues within the C-terminal tail of tubulin. Mediates ATP-dependent polyglutamate side-chain elongation of the polyglutamylation reaction but not the initiation step. Preferentially modifies the alpha-tubulin tail over a beta-tail. The polypeptide is Tubulin polyglutamylase TTLL13 (Homo sapiens (Human)).